The chain runs to 609 residues: MRQLWTQAAVIALTAGTLGAPAHASGQSGQRFTPNFPITQPAAPPPGETIQAQPGEAESLPRPTPIPVQSAPPIAQAELPPPAPVSTPAPAPQPVLRATPPRTVVTTTVTGPVVEVAGKPQVRVVESGDALDAIARGMGSTRAELVKLNDLEPPYRLKLGQKIKGPATTAKAYVVQTGDTMFAIAKRFNVTAAALAEENDLKSGAAIKKGQKLLLPDGYKDKGPIKTTQVIPGTPATMVAEAEPAPATTRPATPAATPSRPVRQPVSEETSEPATTSTTTLSVTGSVVTVAGPRQVHTVKSGDTLTAIARKFDMSVSELAEANKLDTEKPLKLGAKIKGPATTQKAYSVQTGDTLGEIAKRFNVSVKALAAENNLRATASLKKGQKIALPDGFRDKGPIRTTTTTRPATPPANTYARVDSSAAAASTPSSPVPYTPSGAAPRPSAPVAAQPITPPPSSGRTIIETAAAPTEAEIIASGKGKFAWPLRGDIISSFGVKGTGQRNDGLNIRAPQGTPVLSSADGEIAYAGNQVPTFGNLVLVKHADGWVTAYAHLSSTNVKMRQQVKQGEQLGTVGATGGVNEPQLHFEMRYAPTVKDKAKPVDPALVLPR.

Positions 1-24 (MRQLWTQAAVIALTAGTLGAPAHA) are cleaved as a signal peptide. Residues 21-103 (PAHASGQSGQ…PVLRATPPRT (83 aa)) form a disordered region. Residues 25 to 38 (SGQSGQRFTPNFPI) show a composition bias toward polar residues. A compositionally biased stretch (pro residues) spans 79 to 93 (LPPPAPVSTPAPAPQ). LysM domains are found at residues 121-165 (QVRV…KIKG) and 171-215 (KAYV…KLLL). 2 stretches are compositionally biased toward low complexity: residues 242 to 258 (AEPAPATTRPATPAATP) and 265 to 280 (PVSEETSEPATTSTTT). The interval 242-280 (AEPAPATTRPATPAATPSRPVRQPVSEETSEPATTSTTT) is disordered. LysM domains are found at residues 295–339 (QVHT…KIKG) and 345–389 (KAYS…KIAL). Residues 389 to 457 (LPDGFRDKGP…AAQPITPPPS (69 aa)) form a disordered region. The segment covering 400–429 (RTTTTTRPATPPANTYARVDSSAAAASTPS) has biased composition (low complexity). Residues 503-603 (NDGLNIRAPQ…VKDKAKPVDP (101 aa)) are lytM.

The protein resides in the periplasm. Functionally, required for efficient cell division, cell polarity and normal cell morphology. Facilitates remodeling of the peptidoglycan layer and, thus, coordinated constriction of the cell envelope during the division process. Plays a critical role in maintaining proper cell envelope architecture during growth and division. Required for normal envelope invagination during cell division and to establish or maintain outer membrane connections throughout the cell envelope. May serve as a regulatory hub coordinating the activities of multiple peptidoglycan-degrading enzymes during cell constriction. Required to position SdpA and SdpB at midcell. This chain is Cell division protein DipM, found in Caulobacter vibrioides (strain NA1000 / CB15N) (Caulobacter crescentus).